We begin with the raw amino-acid sequence, 75 residues long: Lividin-3 (75 aa).

Positions methionine 1 to cysteine 22 are cleaved as a signal peptide. The propeptide occupies glutamate 23 to valine 40. A disulfide bridge links cysteine 69 with cysteine 75.

As to expression, expressed by the skin glands.

It is found in the secreted. Antimicrobial peptide. The chain is Lividin-3 from Odorrana livida (Green mountain frog).